The sequence spans 317 residues: Probable cell division protein WhiA (317 aa).

The segment at residues 275 to 308 (SLKELGEMLVPKVGKSGVNHRMRKIDELAEKLEE) is a DNA-binding region (H-T-H motif).

This sequence belongs to the WhiA family.

Functionally, involved in cell division and chromosome segregation. This is Probable cell division protein WhiA from Desulfitobacterium hafniense (strain DSM 10664 / DCB-2).